The sequence spans 354 residues: Nicotinate-nucleotide--dimethylbenzimidazole phosphoribosyltransferase (354 aa).

The active-site Proton acceptor is the Glu-317.

This sequence belongs to the CobT family. As to quaternary structure, homodimer.

It carries out the reaction 5,6-dimethylbenzimidazole + nicotinate beta-D-ribonucleotide = alpha-ribazole 5'-phosphate + nicotinate + H(+). The protein operates within nucleoside biosynthesis; alpha-ribazole biosynthesis; alpha-ribazole from 5,6-dimethylbenzimidazole: step 1/2. Catalyzes the synthesis of alpha-ribazole-5'-phosphate from nicotinate mononucleotide (NAMN) and 5,6-dimethylbenzimidazole (DMB). This is Nicotinate-nucleotide--dimethylbenzimidazole phosphoribosyltransferase from Salmonella arizonae (strain ATCC BAA-731 / CDC346-86 / RSK2980).